The chain runs to 246 residues: TATA-box-binding protein (246 aa).

Positions 1 to 27 are disordered; the sequence is MSSDKTSQQTFKLAPNNSVAQSNSIDQ. 2 repeat units span residues 53–129 and 143–220.

Belongs to the TBP family. In terms of assembly, belongs to the TFIID complex together with the TBP-associated factors (TAFs). Binds DNA as monomer.

The protein resides in the nucleus. In terms of biological role, general transcription factor that functions at the core of the DNA-binding multiprotein factor TFIID. Binding of TFIID to the TATA box is the initial transcriptional step of the pre-initiation complex (PIC), playing a role in the activation of eukaryotic genes transcribed by RNA polymerase II. The polypeptide is TATA-box-binding protein (Tetrahymena thermophila).